Consider the following 232-residue polypeptide: Lipoprotein-releasing system ATP-binding protein LolD 2 (232 aa).

The ABC transporter domain occupies 11-231; that stretch reads VYLHDIKRQY…SLQDGVVVEL (221 aa). Position 47 to 54 (47 to 54) interacts with ATP; it reads APSGSGKS.

It belongs to the ABC transporter superfamily. Lipoprotein translocase (TC 3.A.1.125) family. In terms of assembly, the complex is composed of two ATP-binding proteins (LolD) and two transmembrane proteins (LolC and LolE).

The protein localises to the cell inner membrane. Its function is as follows. Part of the ABC transporter complex LolCDE involved in the translocation of mature outer membrane-directed lipoproteins, from the inner membrane to the periplasmic chaperone, LolA. Responsible for the formation of the LolA-lipoprotein complex in an ATP-dependent manner. The chain is Lipoprotein-releasing system ATP-binding protein LolD 2 from Rhodopseudomonas palustris (strain ATCC BAA-98 / CGA009).